Reading from the N-terminus, the 832-residue chain is WD repeat-containing protein 75 (832 aa).

WD repeat units lie at residues 4–43 (QCQI…KVYS), 47–86 (EECI…KLWD), 90–131 (GILI…QLVS), 145–184 (KEIS…YYFK), 193–230 (LKAT…RLWR), 236–275 (KEYT…VQWP), 278–317 (SEEK…SIID), 323–361 (SGII…QFYS), 375–424 (QQEF…KLWE), 431–477 (SFVL…KVWM), 490–528 (SWLC…TVWE), 532–572 (WDLK…CCWN), and 577–614 (ALEW…FLFQ). Residues 764-798 (SQSTEESKEDEEMKSEHSEADSSDETEEMESQKRF) are disordered.

Component of the proposed t-UTP subcomplex of the ribosomal small subunit (SSU) processome. SSU processome is composed of more than 70 proteins and the RNA chaperone small nucleolar RNA (snoRNA) U3.

The protein resides in the nucleus. Its subcellular location is the nucleolus. Ribosome biogenesis factor. Part of the small subunit (SSU) processome, first precursor of the small eukaryotic ribosomal subunit. During the assembly of the SSU processome in the nucleolus, many ribosome biogenesis factors, an RNA chaperone and ribosomal proteins associate with the nascent pre-rRNA and work in concert to generate RNA folding, modifications, rearrangements and cleavage as well as targeted degradation of pre-ribosomal RNA by the RNA exosome. Involved in nucleolar processing of pre-18S ribosomal RNA. Required for optimal pre-ribosomal RNA transcription by RNA polymerase I. The polypeptide is WD repeat-containing protein 75 (wdr75) (Xenopus laevis (African clawed frog)).